The following is a 338-amino-acid chain: RAB6-interacting golgin (338 aa).

2 stretches are compositionally biased toward basic and acidic residues: residues 1–14 (MTEK…DEIL) and 46–59 (RMPD…DQLR). Disordered stretches follow at residues 1-109 (MTEK…LNLD) and 127-188 (ARDK…SPFK). 2 stretches are compositionally biased toward low complexity: residues 60 to 73 (KQQQ…IQKP) and 153 to 167 (SGGD…DDGS). The stretch at 192–244 (LKDFEQHRRMIEEQNKQKKQMLYQAIEQHTQKTAAESRKIEEIRHELSKLESD) forms a coiled coil. The segment at 244 to 260 (DLAVDVALLRKQIDNAC) is essential for Sas-6 binding. Residues 246 to 286 (AVDVALLRKQIDNACIHFANVEKQYVKIEAQFLRAKIELHN) are necessary for localization to the centrosome. The necessary for localization to the Golgi stretch occupies residues 246-323 (AVDVALLRKQ…TELMQKVGLS (78 aa)). The segment at 260–286 (CIHFANVEKQYVKIEAQFLRAKIELHN) is necessary for interaction with Sas-6 and essential for homodimerization.

It belongs to the GORAB family. As to quaternary structure, homodimer (via C-terminus); dimerization appears to be required for its trans-Golgi localization but not for its function and centriolar localization. Interacts (via C-terminus) with Rab6; binds Rab6 as a homodimer, this interaction seems to be required for trans-Golgi localization. Interacts (via C-terminus) with Sas-6; binds as a monomer to a Sas-6 homodimer.

Its subcellular location is the cytoplasm. It localises to the cytoskeleton. The protein localises to the microtubule organizing center. The protein resides in the centrosome. It is found in the centriole. Its subcellular location is the golgi apparatus. It localises to the trans-Golgi network. Its function is as follows. Required for centriole duplication likely through its interaction with Sas-6. During embryogenesis, maternally provided protein is required for centrosome duplication and nuclear division cycles of the syncytial embryos. In femoral chordotonal organs, required for sensory cilia structural integrity and functionality necessary for motor coordination. In male germline, has a role in cytokinesis which seems dependent on its localization to the Golgi. This is RAB6-interacting golgin from Drosophila melanogaster (Fruit fly).